The primary structure comprises 305 residues: Aquaporin NIP6-1 (305 aa).

A disordered region spans residues methionine 1–glycine 30. The segment covering proline 7–proline 23 has biased composition (low complexity). The next 2 helical transmembrane spans lie at leucine 82–valine 102 and threonine 111–glycine 131. The NPA 1 motif lies at asparagine 139–alanine 141. Helical transmembrane passes span valine 159–phenylalanine 179, leucine 194–alanine 214, and alanine 221–alanine 241. The NPA 2 motif lies at asparagine 250–valine 252. Residues isoleucine 267 to isoleucine 287 form a helical membrane-spanning segment. Residue serine 302 is modified to Phosphoserine.

The protein belongs to the MIP/aquaporin (TC 1.A.8) family. NIP (TC 1.A.8.12) subfamily. In terms of tissue distribution, expressed in roots.

The protein resides in the membrane. Transports glycerol, urea and formamide, in Xenopus laevis oocytes. Very low water transport activity. In Arabidopsis thaliana (Mouse-ear cress), this protein is Aquaporin NIP6-1 (NIP6-1).